The primary structure comprises 698 residues: Ubiquitin-like modifier-activating enzyme ATG7 (698 aa).

Positions 11–13 match the FAP motif motif; sequence FAP. A Glycyl lysine isopeptide (Lys-Gly) (interchain with G-Cter in ubiquitin) cross-link involves residue Lys-41. The active-site Glycyl thioester intermediate is the Cys-567. Ser-693 is subject to Phosphoserine.

It belongs to the ATG7 family. In terms of assembly, homodimer. Interacts with ATG3; this interaction is essential for the transfer of ATG8-like proteins's thioester from ATG7 to ATG3 and plays a role in the conjugation of ATG12 to ATG5. Interacts with ATG12. Forms intermediate conjugates with GABARAPL1. Forms intermediate conjugates with ATG8-like proteins such as GABARAP, GABARAPL2 or MAP1LC3A. Interacts with EP300 acetyltransferase. Interacts with FOXO1. Post-translationally, acetylated by EP300. In terms of processing, polyubiquitinated on Lys-41 via 'Lys-63'-linked ubiquitin by TRIM32; this modification positiely regulates ATG8 and ATG12 activating enzyme activity leading to initiation of autophagy under metabolic stress. In terms of tissue distribution, widely expressed.

The protein resides in the cytoplasm. Its subcellular location is the preautophagosomal structure. Its function is as follows. E1-like activating enzyme involved in the 2 ubiquitin-like systems required for cytoplasm to vacuole transport (Cvt) and autophagy. Activates ATG12 for its conjugation with ATG5 as well as the ATG8 family proteins for their conjugation with phosphatidylethanolamine. Both systems are needed for the ATG8 association to Cvt vesicles and autophagosomes membranes. Required for autophagic death induced by caspase-8 inhibition. Facilitates LC3-I lipidation with phosphatidylethanolamine to form LC3-II which is found on autophagosomal membranes. Required for mitophagy which contributes to regulate mitochondrial quantity and quality by eliminating the mitochondria to a basal level to fulfill cellular energy requirements and preventing excess ROS production. Modulates p53/TP53 activity to regulate cell cycle and survival during metabolic stress. Also plays a key role in the maintenance of axonal homeostasis, the prevention of axonal degeneration, the maintenance of hematopoietic stem cells, the formation of Paneth cell granules, as well as in adipose differentiation. Plays a role in regulating the liver clock and glucose metabolism by mediating the autophagic degradation of CRY1 (clock repressor) in a time-dependent manner. This is Ubiquitin-like modifier-activating enzyme ATG7 from Rattus norvegicus (Rat).